Consider the following 90-residue polypeptide: Small ribosomal subunit protein bS18A (90 aa).

The protein belongs to the bacterial ribosomal protein bS18 family. Part of the 30S ribosomal subunit. Forms a tight heterodimer with protein bS6.

Binds as a heterodimer with protein bS6 to the central domain of the 16S rRNA, where it helps stabilize the platform of the 30S subunit. The sequence is that of Small ribosomal subunit protein bS18A from Roseiflexus castenholzii (strain DSM 13941 / HLO8).